Here is a 1336-residue protein sequence, read N- to C-terminus: Cytokinesis protein sepH (1336 aa).

The span at 1-10 (MVSRSSETSE) shows a compositional bias: low complexity. Positions 1-46 (MVSRSSETSEGPPPPSKIPGTPAKTRLSRLNSSPAKQDKPKDDRVV) are disordered. Over residues 36–46 (KQDKPKDDRVV) the composition is skewed to basic and acidic residues. One can recognise a Protein kinase domain in the interval 59-309 (YQLGDCLGKG…ARKLLKHPWI (251 aa)). ATP-binding positions include 65 to 73 (LGKGAFGSV) and lysine 88. The active-site Proton acceptor is aspartate 181. The disordered stretch occupies residues 368 to 402 (SRYTPTKDILPSPVSKHVTDRFRSPDSTEEDNWDD). Positions 384–393 (HVTDRFRSPD) are enriched in basic and acidic residues. Residues 654-682 (AQLEEGLDEVDLEANIARDKYARLRGQVE) are a coiled coil. A compositionally biased stretch (basic and acidic residues) spans 1194-1205 (ERSESFSLEKRK). A disordered region spans residues 1194–1336 (ERSESFSLEK…PTHADSDWAS (143 aa)). Residues 1213–1236 (TSTTPPGYLANQSAPATPQINRFN) are compositionally biased toward polar residues. 2 stretches are compositionally biased toward low complexity: residues 1253–1264 (PSLSSSALALRP) and 1272–1285 (PSLSAGLSSSAGPS). The span at 1315–1327 (SRRRSILPQRRRP) shows a compositional bias: basic residues.

Belongs to the protein kinase superfamily. Ser/Thr protein kinase family. CDC7 subfamily. Requires Mg(2+) as cofactor.

It catalyses the reaction L-seryl-[protein] + ATP = O-phospho-L-seryl-[protein] + ADP + H(+). The enzyme catalyses L-threonyl-[protein] + ATP = O-phospho-L-threonyl-[protein] + ADP + H(+). Functionally, required for early events during cytokinesis including localization of cytoskeletal components to the cytokinetic ring. The protein is Cytokinesis protein sepH of Aspergillus niger (strain ATCC MYA-4892 / CBS 513.88 / FGSC A1513).